The chain runs to 185 residues: Ribosome-recycling factor (185 aa).

The segment at 127–158 (AVRNTRQDANNKVKKLEKDKEISEDESKKAQE) is disordered.

The protein belongs to the RRF family.

It is found in the cytoplasm. Functionally, responsible for the release of ribosomes from messenger RNA at the termination of protein biosynthesis. May increase the efficiency of translation by recycling ribosomes from one round of translation to another. The chain is Ribosome-recycling factor from Helicobacter pylori (strain G27).